A 776-amino-acid chain; its full sequence is Probable exo-1,4-beta-xylosidase bxlB (776 aa).

The first 23 residues, 1–23 (MVHLSPLLRPLAAFSFFTSLAST), serve as a signal peptide directing secretion. 2 N-linked (GlcNAc...) asparagine glycosylation sites follow: asparagine 65 and asparagine 105. Residue aspartate 291 is part of the active site. N-linked (GlcNAc...) asparagine glycans are attached at residues asparagine 343, asparagine 410, asparagine 421, asparagine 462, asparagine 623, and asparagine 766.

The protein belongs to the glycosyl hydrolase 3 family.

The protein resides in the secreted. The catalysed reaction is Hydrolysis of (1-&gt;4)-beta-D-xylans, to remove successive D-xylose residues from the non-reducing termini.. The protein operates within glycan degradation; xylan degradation. In terms of biological role, xylan 1,4-beta-xylosidase involved in the hydrolysis of xylan, a major structural heterogeneous polysaccharide found in plant biomass representing the second most abundant polysaccharide in the biosphere, after cellulose. This is Probable exo-1,4-beta-xylosidase bxlB (bxlB) from Aspergillus flavus (strain ATCC 200026 / FGSC A1120 / IAM 13836 / NRRL 3357 / JCM 12722 / SRRC 167).